Consider the following 146-residue polypeptide: Ribosomal RNA large subunit methyltransferase H (146 aa).

Residues Leu62, Gly94, and 113–118 each bind S-adenosyl-L-methionine; that span reads LGELTL.

Belongs to the RNA methyltransferase RlmH family. Homodimer.

The protein resides in the cytoplasm. It carries out the reaction pseudouridine(1915) in 23S rRNA + S-adenosyl-L-methionine = N(3)-methylpseudouridine(1915) in 23S rRNA + S-adenosyl-L-homocysteine + H(+). Its function is as follows. Specifically methylates the pseudouridine at position 1915 (m3Psi1915) in 23S rRNA. In Deinococcus radiodurans (strain ATCC 13939 / DSM 20539 / JCM 16871 / CCUG 27074 / LMG 4051 / NBRC 15346 / NCIMB 9279 / VKM B-1422 / R1), this protein is Ribosomal RNA large subunit methyltransferase H.